Consider the following 265-residue polypeptide: Thiazole synthase (265 aa).

Lysine 103 (schiff-base intermediate with DXP) is an active-site residue. Residues glycine 164, alanine 190 to glycine 191, and asparagine 212 to threonine 213 contribute to the 1-deoxy-D-xylulose 5-phosphate site.

This sequence belongs to the ThiG family. In terms of assembly, homotetramer. Forms heterodimers with either ThiH or ThiS.

It is found in the cytoplasm. The catalysed reaction is [ThiS sulfur-carrier protein]-C-terminal-Gly-aminoethanethioate + 2-iminoacetate + 1-deoxy-D-xylulose 5-phosphate = [ThiS sulfur-carrier protein]-C-terminal Gly-Gly + 2-[(2R,5Z)-2-carboxy-4-methylthiazol-5(2H)-ylidene]ethyl phosphate + 2 H2O + H(+). It functions in the pathway cofactor biosynthesis; thiamine diphosphate biosynthesis. Functionally, catalyzes the rearrangement of 1-deoxy-D-xylulose 5-phosphate (DXP) to produce the thiazole phosphate moiety of thiamine. Sulfur is provided by the thiocarboxylate moiety of the carrier protein ThiS. In vitro, sulfur can be provided by H(2)S. In Bordetella pertussis (strain Tohama I / ATCC BAA-589 / NCTC 13251), this protein is Thiazole synthase.